The sequence spans 364 residues: DNA polymerase IV (364 aa).

Positions Val6–Gly194 constitute a UmuC domain. 2 residues coordinate Mg(2+): Asp10 and Asp111. Glu112 is a catalytic residue.

It belongs to the DNA polymerase type-Y family. Monomer. Mg(2+) is required as a cofactor.

The protein resides in the cytoplasm. The enzyme catalyses DNA(n) + a 2'-deoxyribonucleoside 5'-triphosphate = DNA(n+1) + diphosphate. Its function is as follows. Poorly processive, error-prone DNA polymerase involved in untargeted mutagenesis. Copies undamaged DNA at stalled replication forks, which arise in vivo from mismatched or misaligned primer ends. These misaligned primers can be extended by PolIV. Exhibits no 3'-5' exonuclease (proofreading) activity. May be involved in translesional synthesis. The sequence is that of DNA polymerase IV from Nitrosopumilus maritimus (strain SCM1).